We begin with the raw amino-acid sequence, 513 residues long: MQLSPSEISGLIKQRIEKFDNSVELKSEGTIVSVADGIVTIYGLNDVAAGEMIKLPGDVYGLALNLNTDSVGAVVLGDYEHIKEGDKAYCTGRILEVPVGEALLGRVVDALGNPIDGKGEVATDLTSPIEKIAPGVIWRKSVDQALQTGIKSIDSMVPIGRGQRELIIGDRQIGKTAIAVDTIINQKGTGVKCIYVAIGQKASTIANIVRQLEEHGAMEHAIIVAATASDSAALQYIAPYAGCSMGEYFRDRGQDALIVYDDLTKQAWAYRQISLLLRRPPGREAYPGDVFYLHSRLLERAARVNEEYVEKFTNGEVKGKTGSLTALPIIETQAGDISAFVPTNVISITDGQIFLETDLFNSGLRPAINPGNSVSRVGGAAQTKIIKKLGGGIRLALAQYRELEAFSQFASDLDEATRAQLNRGQRVTELLKQKQFSTLSVALMALSLYAADNGYLDNLEVSEVIPFESALHALAETKYSDVIAEINETGKYDADIADKLKIIVEDCKANQAW.

Glycine 169–threonine 176 is a binding site for ATP.

The protein belongs to the ATPase alpha/beta chains family. As to quaternary structure, F-type ATPases have 2 components, CF(1) - the catalytic core - and CF(0) - the membrane proton channel. CF(1) has five subunits: alpha(3), beta(3), gamma(1), delta(1), epsilon(1). CF(0) has three main subunits: a(1), b(2) and c(9-12). The alpha and beta chains form an alternating ring which encloses part of the gamma chain. CF(1) is attached to CF(0) by a central stalk formed by the gamma and epsilon chains, while a peripheral stalk is formed by the delta and b chains.

The protein localises to the cell inner membrane. It carries out the reaction ATP + H2O + 4 H(+)(in) = ADP + phosphate + 5 H(+)(out). Its function is as follows. Produces ATP from ADP in the presence of a proton gradient across the membrane. The alpha chain is a regulatory subunit. This chain is ATP synthase subunit alpha, found in Francisella tularensis subsp. tularensis (strain SCHU S4 / Schu 4).